A 765-amino-acid polypeptide reads, in one-letter code: Protein O-mannosyl-transferase 2 (765 aa).

The interval 1 to 31 is disordered; it reads MAASVVKTPKCPRRGSVKDVAQNAPRTAPTS. A helical transmembrane segment spans residues 35–55; the sequence is ANWNWWLLLATVFLVTFATRF. Residues asparagine 80, asparagine 106, and asparagine 119 are each glycosylated (N-linked (GlcNAc...) asparagine). 5 helical membrane-spanning segments follow: residues 128–148, 175–195, 206–226, 228–248, and 268–288; these read YFCT…VYDL, ILLD…MVKV, GLRW…TISV, FVGL…LWLI, and ITLI…HLSV. N-linked (GlcNAc...) asparagine glycans are attached at residues asparagine 290 and asparagine 314. 3 MIR domains span residues 318-374, 384-440, and 445-501; these read PRDV…IRPH, VQIL…VLIV, and NETV…VEDN. An N-linked (GlcNAc...) asparagine glycan is attached at asparagine 445. Helical transmembrane passes span 566–586, 667–687, 689–709, and 719–739; these read IYLL…ALFV, LFLG…VLYF, HYFP…NYIL, and VILG…SPLA. Asparagine 751 carries N-linked (GlcNAc...) asparagine glycosylation.

Belongs to the glycosyltransferase 39 family. In terms of assembly, interacts with Rt/POMT1. At the cellular blastoderm stage, expression accumulates in the ventrally located mesoderm primordium. At germ band extension, mesoderm expression is seen as stripes of strong expression. A very strong signal is also detected in the invaginating gut. As the germ band retracts, mesodermal expression decays and becomes restricted to somatic muscle precursors.

The protein localises to the endoplasmic reticulum membrane. The enzyme catalyses a di-trans,poly-cis-dolichyl beta-D-mannosyl phosphate + L-seryl-[protein] = 3-O-(alpha-D-mannosyl)-L-seryl-[protein] + a di-trans,poly-cis-dolichyl phosphate + H(+). The catalysed reaction is a di-trans,poly-cis-dolichyl beta-D-mannosyl phosphate + L-threonyl-[protein] = 3-O-(alpha-D-mannosyl)-L-threonyl-[protein] + a di-trans,poly-cis-dolichyl phosphate + H(+). It functions in the pathway protein modification; protein glycosylation. Functionally, rt/POMT1 and tw/POMT2 function as a protein O-mannosyltransferase in association with each other to generate and maintain normal muscle development. The chain is Protein O-mannosyl-transferase 2 (tw) from Drosophila melanogaster (Fruit fly).